Reading from the N-terminus, the 664-residue chain is CRISPR-associated DNA-binding protein Cas12m (664 aa).

The recognition domain (REC1-N) stretch occupies residues Met1 to Asp137. Residues Glu138–Gly212 form a recognition domain (REC2) region. Residues Asn213–Gly270 are recognition domain (REC1-C). A wedge domain (WED) region spans residues Arg271–Thr390. The segment at Asp391–Arg404 is linker. The segment at Cys405–Ser618 is ruvC-I. The interval Ser618–Asp650 is target nucleic-acid binding (TNB). Zn(2+) is bound by residues Cys625, Cys628, Cys642, and Cys645. A ruvC-II region spans residues Gln651 to Leu664. Asp652 serves as a coordination point for Mg(2+).

It belongs to the CRISPR-associated DNA-binding protein Cas12m family. Mg(2+) serves as cofactor. It depends on Zn(2+) as a cofactor.

Its function is as follows. CRISPR (clustered regularly interspaced short palindromic repeat), is an adaptive immune system that provides protection against mobile genetic elements (viruses, transposable elements and conjugative plasmids). CRISPR clusters contain sequences complementary to antecedent mobile elements and target invading nucleic acids. CRISPR clusters are transcribed and processed into CRISPR RNA (crRNA). Recognizes a short motif in the CRISPR repeat sequences (the 5' PAM or protospacer adjacent motif, 5'-CCN-3' in this organism) to help distinguish self versus nonself, as targets within the bacterial CRISPR locus do not have PAMs. Cas12m-crRNA binds DNA in a PAM-dependent, crRNA-guided fashion. DNA-binding probably inhibits transcription, leading to gene silencing. Upon expression in E.coli as a CRISPR region preferentially binds to its associated crRNA. Probably required for pre-crRNA processing to mature crRNA. The sequence is that of CRISPR-associated DNA-binding protein Cas12m from Pelobacter propionicus (strain DSM 2379 / NBRC 103807 / OttBd1).